The following is an 807-amino-acid chain: Glycerol-3-phosphate acyltransferase (807 aa).

The HXXXXD motif signature appears at 308–313 (CHRSHM).

The protein belongs to the GPAT/DAPAT family.

The protein resides in the cell inner membrane. It carries out the reaction sn-glycerol 3-phosphate + an acyl-CoA = a 1-acyl-sn-glycero-3-phosphate + CoA. The protein operates within phospholipid metabolism; CDP-diacylglycerol biosynthesis; CDP-diacylglycerol from sn-glycerol 3-phosphate: step 1/3. The chain is Glycerol-3-phosphate acyltransferase from Shewanella baltica (strain OS155 / ATCC BAA-1091).